The primary structure comprises 37 residues: Large ribosomal subunit protein bL36c (37 aa).

The protein belongs to the bacterial ribosomal protein bL36 family.

Its subcellular location is the plastid. It is found in the chloroplast. This is Large ribosomal subunit protein bL36c from Physcomitrium patens (Spreading-leaved earth moss).